Reading from the N-terminus, the 343-residue chain is Heme A synthase (343 aa).

8 helical membrane-spanning segments follow: residues 13 to 33, 96 to 116, 130 to 150, 161 to 181, 197 to 217, 258 to 278, 294 to 314, and 318 to 338; these read VAIW…VGGA, HRLL…VFLI, AMLG…SSGL, LMTH…TALD, GWAL…ALVA, FNHR…VVLA, AVAA…MAAV, and LGVL…AFAW. Histidine 260 is a binding site for heme. Histidine 322 contributes to the heme binding site.

Belongs to the COX15/CtaA family. Type 2 subfamily. As to quaternary structure, interacts with CtaB. Heme b serves as cofactor.

It is found in the cell membrane. It catalyses the reaction Fe(II)-heme o + 2 A + H2O = Fe(II)-heme a + 2 AH2. The protein operates within porphyrin-containing compound metabolism; heme A biosynthesis; heme A from heme O: step 1/1. Catalyzes the conversion of heme O to heme A by two successive hydroxylations of the methyl group at C8. The first hydroxylation forms heme I, the second hydroxylation results in an unstable dihydroxymethyl group, which spontaneously dehydrates, resulting in the formyl group of heme A. The chain is Heme A synthase from Caulobacter vibrioides (strain ATCC 19089 / CIP 103742 / CB 15) (Caulobacter crescentus).